We begin with the raw amino-acid sequence, 235 residues long: MHSNSTIEKSVNSLADSLVIRQLNTMDYSQVWHAMKDFTDNRDDTTADELWLVEHPAVFTQGQAGKAEHLLVPGDIEVVKVDRGGQVTYHGPGQLVVYVMINLRRKKIGVRQLVTLIENSIVSALTDYDIAAYAKADAPGVYVDEKKIASLGLRVRKGCSFHGLAMNVNMDLSPFLRINPCGYAGLEMVQTADLQGPKDTASASTALVKHLINLLKANNVSHQVGLPNENNKYHE.

The BPL/LPL catalytic domain occupies 44–231 (DTTADELWLV…HQVGLPNENN (188 aa)). Residues 83-90 (RGGQVTYH), 150-152 (SLG), and 163-165 (GLA) contribute to the substrate site. Cys-181 (acyl-thioester intermediate) is an active-site residue.

It belongs to the LipB family.

It is found in the cytoplasm. It carries out the reaction octanoyl-[ACP] + L-lysyl-[protein] = N(6)-octanoyl-L-lysyl-[protein] + holo-[ACP] + H(+). Its pathway is protein modification; protein lipoylation via endogenous pathway; protein N(6)-(lipoyl)lysine from octanoyl-[acyl-carrier-protein]: step 1/2. Catalyzes the transfer of endogenously produced octanoic acid from octanoyl-acyl-carrier-protein onto the lipoyl domains of lipoate-dependent enzymes. Lipoyl-ACP can also act as a substrate although octanoyl-ACP is likely to be the physiological substrate. This chain is Octanoyltransferase, found in Colwellia psychrerythraea (strain 34H / ATCC BAA-681) (Vibrio psychroerythus).